Here is a 612-residue protein sequence, read N- to C-terminus: Dihydroxy-acid dehydratase (612 aa).

Mg(2+) is bound at residue Asp-81. Cys-122 is a [2Fe-2S] cluster binding site. 2 residues coordinate Mg(2+): Asp-123 and Lys-124. Lys-124 bears the N6-carboxylysine mark. Residue Cys-195 coordinates [2Fe-2S] cluster. Glu-491 contacts Mg(2+). The active-site Proton acceptor is Ser-517.

It belongs to the IlvD/Edd family. As to quaternary structure, homodimer. [2Fe-2S] cluster serves as cofactor. Requires Mg(2+) as cofactor.

It carries out the reaction (2R)-2,3-dihydroxy-3-methylbutanoate = 3-methyl-2-oxobutanoate + H2O. It catalyses the reaction (2R,3R)-2,3-dihydroxy-3-methylpentanoate = (S)-3-methyl-2-oxopentanoate + H2O. The protein operates within amino-acid biosynthesis; L-isoleucine biosynthesis; L-isoleucine from 2-oxobutanoate: step 3/4. It participates in amino-acid biosynthesis; L-valine biosynthesis; L-valine from pyruvate: step 3/4. Functions in the biosynthesis of branched-chain amino acids. Catalyzes the dehydration of (2R,3R)-2,3-dihydroxy-3-methylpentanoate (2,3-dihydroxy-3-methylvalerate) into 2-oxo-3-methylpentanoate (2-oxo-3-methylvalerate) and of (2R)-2,3-dihydroxy-3-methylbutanoate (2,3-dihydroxyisovalerate) into 2-oxo-3-methylbutanoate (2-oxoisovalerate), the penultimate precursor to L-isoleucine and L-valine, respectively. The chain is Dihydroxy-acid dehydratase from Rhizobium etli (strain CIAT 652).